We begin with the raw amino-acid sequence, 538 residues long: Sensor protein CitS (538 aa).

Residues 1 to 13 are Cytoplasmic-facing; that stretch reads MKRRLFPLTFSAK. A helical transmembrane segment spans residues 14–34; the sequence is MMGFIALLIIAMFVLLGVFLN. Over 35–174 the chain is Extracellular; it reads EQYARTLEEQ…DIQQVIGERL (140 aa). A helical transmembrane segment spans residues 175 to 195; that stretch reads IAMWQIVVVIMILGLMGTWLV. The Cytoplasmic portion of the chain corresponds to 196 to 538; that stretch reads ANTVKKATLG…TIPKHEAKEG (343 aa). Positions 216–282 constitute a PAS domain; that stretch reads QQKEAILQSI…PEVLQVGKGQ (67 aa). The 196-residue stretch at 339–534 folds into the Histidine kinase domain; sequence AQTHEFSNKL…CFVLTIPKHE (196 aa). The residue at position 342 (H342) is a Phosphohistidine; by autocatalysis.

It is found in the cell membrane. The catalysed reaction is ATP + protein L-histidine = ADP + protein N-phospho-L-histidine.. Its function is as follows. Member of the two-component regulatory system CitT/CitS. Functions probably as a membrane-associated protein kinase that phosphorylates CitT in response to environmental citrate or Mg(2+)-citrate complex. The protein is Sensor protein CitS (citS) of Halalkalibacterium halodurans (strain ATCC BAA-125 / DSM 18197 / FERM 7344 / JCM 9153 / C-125) (Bacillus halodurans).